Here is a 293-residue protein sequence, read N- to C-terminus: Movement protein BC1 (293 aa).

Belongs to the begomovirus movement protein BC1 family. As to quaternary structure, binds to dimeric supercoiled plasmid DNA. Phosphorylated.

It is found in the host cell membrane. Its subcellular location is the host microsome membrane. The protein resides in the host endoplasmic reticulum membrane. Transports viral genome to neighboring plant cells directly through plasmosdesmata, without any budding. The movement protein allows efficient cell to cell propagation, by bypassing the host cell wall barrier. Begomovirus genome is shuttled out of nucleus by Nuclear shuttle protein (NSP) and the movement protein transports the DNA-NSP complex to cell plasmodesmata and facilitates further movement across the cell wall. This is Movement protein BC1 from Macroptilium lathyroides (Lima bean).